We begin with the raw amino-acid sequence, 161 residues long: Nucleotide-binding protein XOO0647 (161 aa).

This sequence belongs to the YajQ family.

Its function is as follows. Nucleotide-binding protein. This chain is Nucleotide-binding protein XOO0647, found in Xanthomonas oryzae pv. oryzae (strain MAFF 311018).